Reading from the N-terminus, the 274-residue chain is MAIHLYKTSTPGTRNGAVDSQVKSNPRNNLIYGQHRCGKGRNARGIITARHRGGGHKRLYRKIDFRRNEKDIYGRIVTIEYDPNRNAYICFIHYGDGEKRYILHPRGAIIGDIIVSGTEVPIKMGNALPLTDMPLGTAIHNIEITLGRGGQLARAAGAVAKLIAKEGKSATLKLPSGEVRLISKNCSATVGQVGNVGVNQKSLGRAGSKCWLGKRPVVRGVVMNPVDHPHGGGEGRAPIGRKKPATPWGHPALGRRSRKRNKYSDNLILRRRSK.

Disordered regions lie at residues 1-21 (MAIH…VDSQ) and 225-274 (PVDH…RRSK).

It belongs to the universal ribosomal protein uL2 family. In terms of assembly, part of the 50S ribosomal subunit.

It localises to the plastid. Its subcellular location is the chloroplast. This is Large ribosomal subunit protein uL2cz/uL2cy (rpl2-A) from Gossypium barbadense (Sea Island cotton).